The chain runs to 222 residues: ER membrane protein complex subunit 7 homolog (222 aa).

An N-terminal signal peptide occupies residues 1–16; that stretch reads MKSILLLFSLIVLGSA. At 17–145 the chain is on the extracellular side; it reads TEEVSRTEQT…RKREEWRITD (129 aa). Residues 146-166 traverse the membrane as a helical segment; sequence MLFSPMVLMLVVPLVVMLILP. Residues 167–222 lie on the Cytoplasmic side of the membrane; that stretch reads KMTANDPELKKEMENMQMPKVDMPDVGEMMANFFGGSAPAKKKAVTGGSGSGQRRK.

Belongs to the EMC7 family.

It is found in the membrane. This is ER membrane protein complex subunit 7 homolog from Caenorhabditis elegans.